A 213-amino-acid chain; its full sequence is Thymidylate kinase (213 aa).

Residue 9 to 16 (GLEGAGKS) coordinates ATP.

The protein belongs to the thymidylate kinase family.

The enzyme catalyses dTMP + ATP = dTDP + ADP. Functionally, phosphorylation of dTMP to form dTDP in both de novo and salvage pathways of dTTP synthesis. The sequence is that of Thymidylate kinase from Aeromonas hydrophila subsp. hydrophila (strain ATCC 7966 / DSM 30187 / BCRC 13018 / CCUG 14551 / JCM 1027 / KCTC 2358 / NCIMB 9240 / NCTC 8049).